A 452-amino-acid polypeptide reads, in one-letter code: UDP-N-acetylmuramoylalanine--D-glutamate ligase (452 aa).

115-121 contributes to the ATP binding site; the sequence is GTNGKTT.

Belongs to the MurCDEF family.

Its subcellular location is the cytoplasm. It catalyses the reaction UDP-N-acetyl-alpha-D-muramoyl-L-alanine + D-glutamate + ATP = UDP-N-acetyl-alpha-D-muramoyl-L-alanyl-D-glutamate + ADP + phosphate + H(+). It functions in the pathway cell wall biogenesis; peptidoglycan biosynthesis. Functionally, cell wall formation. Catalyzes the addition of glutamate to the nucleotide precursor UDP-N-acetylmuramoyl-L-alanine (UMA). In Elusimicrobium minutum (strain Pei191), this protein is UDP-N-acetylmuramoylalanine--D-glutamate ligase.